Here is a 307-residue protein sequence, read N- to C-terminus: Ribosomal RNA small subunit methyltransferase H (307 aa).

S-adenosyl-L-methionine is bound by residues 38–40 (GGH), aspartate 58, phenylalanine 82, aspartate 99, and glutamine 106.

This sequence belongs to the methyltransferase superfamily. RsmH family.

It is found in the cytoplasm. The enzyme catalyses cytidine(1402) in 16S rRNA + S-adenosyl-L-methionine = N(4)-methylcytidine(1402) in 16S rRNA + S-adenosyl-L-homocysteine + H(+). Functionally, specifically methylates the N4 position of cytidine in position 1402 (C1402) of 16S rRNA. This chain is Ribosomal RNA small subunit methyltransferase H, found in Variovorax paradoxus (strain S110).